The following is a 54-amino-acid chain: Lectin alpha chain (54 aa).

It belongs to the leguminous lectin family. In terms of assembly, tetramer of two alpha and two beta chains.

The sequence is that of Lectin alpha chain from Lathyrus odoratus (Sweet pea).